We begin with the raw amino-acid sequence, 509 residues long: Coiled-coil domain-containing protein 181 (509 aa).

Disordered regions lie at residues 1 to 122 (MDED…EDEE) and 237 to 369 (FLPP…EKKK). Basic and acidic residues-rich tracts occupy residues 22–33 (DLEWLINDKEKS) and 41–56 (ACKK…KENE). Residues 60-69 (ELGQQLSDPD) are compositionally biased toward polar residues. 2 stretches are compositionally biased toward basic and acidic residues: residues 70 to 82 (NSPK…RRND) and 266 to 275 (IKKEESEAKG). Residues 319–333 (RIQSAGVSPVTSTYC) are compositionally biased toward polar residues. Coiled coils occupy residues 335–377 (SPRQ…VFKA) and 418–488 (LKKK…RSKQ). A compositionally biased stretch (basic and acidic residues) spans 337-369 (RQKELQKQLERKREKLKREEEQRKLEEENEKKK).

This sequence belongs to the CCDC181 family. As to quaternary structure, homodimer. Interacts with HOOK1. Interacts with HOOK2. Interacts with HOOK3. As to expression, predominantly expressed in testis. Expressed at lower level in brain, eye, trachea and lung. Barely expressed in tongue, heart, liver, kidney, spleen and muscle. Present at high level in elongating spermatids, whereas lower levels are observed in round spermatids (at protein level).

It is found in the cytoplasm. It localises to the cytoskeleton. The protein localises to the cell projection. Its subcellular location is the cilium. The protein resides in the flagellum. In terms of biological role, microtubule-binding protein that localizes to the microtubular manchette of elongating spermatids. This chain is Coiled-coil domain-containing protein 181, found in Mus musculus (Mouse).